A 631-amino-acid polypeptide reads, in one-letter code: ATP-dependent RNA helicase mrh4, mitochondrial (631 aa).

The N-terminal 45 residues, Met-1–Arg-45, are a transit peptide targeting the mitochondrion. A disordered region spans residues Lys-68–Pro-111. Positions Arg-98 to Lys-108 are enriched in basic and acidic residues. A Q motif motif is present at residues Thr-141–Arg-174. The segment covering Leu-180–Ala-193 has biased composition (basic and acidic residues). Positions Leu-180–Gln-199 are disordered. One can recognise a Helicase ATP-binding domain in the interval Asp-194 to Leu-406. Ala-207–Thr-214 is a binding site for ATP. Residues Glu-229–Glu-249 are disordered. Residues Asp-353–Asp-356 carry the DEAD box motif. The 177-residue stretch at Gly-455–Ile-631 folds into the Helicase C-terminal domain.

Belongs to the DEAD box helicase family. MRH4 subfamily.

Its subcellular location is the mitochondrion. The enzyme catalyses ATP + H2O = ADP + phosphate + H(+). Functionally, ATP-binding RNA helicase involved in mitochondrial RNA metabolism. Required for maintenance of mitochondrial DNA. The protein is ATP-dependent RNA helicase mrh4, mitochondrial (mrh4) of Neosartorya fischeri (strain ATCC 1020 / DSM 3700 / CBS 544.65 / FGSC A1164 / JCM 1740 / NRRL 181 / WB 181) (Aspergillus fischerianus).